The chain runs to 306 residues: Lipid A biosynthesis palmitoleoyltransferase (306 aa).

The helical transmembrane segment at 20 to 40 (WFGLGVLWLWVQLPYPVLCFL) threads the bilayer. The HXXXXD motif signature appears at 132–137 (HFMSLE).

Belongs to the LpxL/LpxM/LpxP family. LpxP subfamily.

The protein resides in the cell inner membrane. It carries out the reaction (9Z)-hexadecenoyl-[ACP] + alpha-Kdo-(2-&gt;4)-alpha-Kdo-(2-&gt;6)-lipid IVA (E. coli) = (9Z)-hexadecenoyl-(Kdo)2-lipid IVA (E. coli) + holo-[ACP]. The protein operates within bacterial outer membrane biogenesis; lipopolysaccharide biosynthesis. Its function is as follows. Catalyzes the transfer of palmitoleate from palmitoleoyl-[acyl-carrier-protein] (ACP) to Kdo(2)-lipid IV(A) to form Kdo(2)-(palmitoleoyl)-lipid IV(A). Required for the biosynthesis of a distinct molecular species of lipid A, which is present only in cells grown at low temperatures. It may confer a selective advantage to cells growing at lower temperatures by making the outer membrane a more effective barrier to harmful chemicals. In Escherichia coli (strain K12), this protein is Lipid A biosynthesis palmitoleoyltransferase.